The sequence spans 825 residues: Tuftelin-interacting protein 11 (825 aa).

Positions 1–135 are disordered; sequence MSMSHLYGKD…RTFAGGIKSN (135 aa). Residues 11–25 show a composition bias toward acidic residues; that stretch reads EDSDGVEMENFEITD. Basic and acidic residues-rich tracts occupy residues 41–61 and 85–114; these read QTKEEATYGMWAERDSDDERP and PAAEEKSDSDSDSETQARRETFPKDFEAKK. Residues 122–135 are compositionally biased toward polar residues; it reads KPSQRTFAGGIKSN. One can recognise a G-patch domain in the interval 145-191; it reads TKGIGQKLLQKMGYVQGRGLGKNAQGIIAPIEAKQRKGKGAVGAYGS.

It belongs to the TFP11/STIP family. In terms of assembly, identified in the spliceosome C complex.

The protein resides in the nucleus. Involved in pre-mRNA splicing, specifically in spliceosome disassembly during late-stage splicing events. The protein is Tuftelin-interacting protein 11 (tfip11) of Xenopus tropicalis (Western clawed frog).